A 491-amino-acid chain; its full sequence is MGWKEAAAPVLTRMPAVERPEGHVPFRRKMYWTGGVLVLYFFLTNVPLWGIQTAGNDFFGQFRSLLAGGQGTVLQLGIGPIVTASIVLQLLGGANLLGLDTDNDPRDQAIYQGLQKFLVGVMVVLTGAPMVFLGNFLQPSQQLAQSMPGGAFGVEVLIFAQIAAGGILLLFMDEVISKWGVGSGIGLFIVAGVSQSLVGGLVFWEGGVGSQGLLPTWFDIIVGNVSNMPPLLSGSGIEFLLMQAGILGLLTTLFIYVVVVYAESVRVEIPLSHARVKGARGRFPVKLIYASVLPMILVRALQANIQFLGQILNSTLASMPTWLGVYGGNGQVTGGLFYYLAPIYSPNAWMWWTSGATAARWQVLIRIAIDLSFMIIGGAIFAIFWVETADMGPDATARQIQNSGMQIPGFRKNQGVIEKVMERYIPQVTVIGGALVGLLAVMANMLGTIGNVSGTGLLLTISITYKLYEEIAEEQMMEMHPMMREMFGGGD.

Residues 1–20 are Cytoplasmic-facing; the sequence is MGWKEAAAPVLTRMPAVERP. A helical membrane pass occupies residues 21-47; that stretch reads EGHVPFRRKMYWTGGVLVLYFFLTNVP. Topologically, residues 48 to 58 are extracellular; the sequence is LWGIQTAGNDF. The segment at residues 59 to 66 is an intramembrane region (helical); that stretch reads FGQFRSLL. Residues 59 to 87 form a discontinuously helical membrane-spanning segment; it reads FGQFRSLLAGGQGTVLQLGIGPIVTASIV. Residues 67–78 lie within the membrane without spanning it; it reads AGGQGTVLQLGI. The helical intramembrane region spans 79–87; the sequence is GPIVTASIV. Over 88–109 the chain is Cytoplasmic; it reads LQLLGGANLLGLDTDNDPRDQA. The helical transmembrane segment at 110–134 threads the bilayer; the sequence is IYQGLQKFLVGVMVVLTGAPMVFLG. Over 135–152 the chain is Extracellular; sequence NFLQPSQQLAQSMPGGAF. A helical transmembrane segment spans residues 153 to 177; that stretch reads GVEVLIFAQIAAGGILLLFMDEVIS. The Cytoplasmic segment spans residues 178-183; that stretch reads KWGVGS. The helical transmembrane segment at 184 to 202 threads the bilayer; that stretch reads GIGLFIVAGVSQSLVGGLV. Residues 203-244 lie on the Extracellular side of the membrane; that stretch reads FWEGGVGSQGLLPTWFDIIVGNVSNMPPLLSGSGIEFLLMQA. Residues 245–266 traverse the membrane as a helical segment; sequence GILGLLTTLFIYVVVVYAESVR. Residues 267–291 lie on the Cytoplasmic side of the membrane; the sequence is VEIPLSHARVKGARGRFPVKLIYAS. Residues 292-313 traverse the membrane as a helical segment; it reads VLPMILVRALQANIQFLGQILN. Residues 314-365 lie on the Extracellular side of the membrane; that stretch reads STLASMPTWLGVYGGNGQVTGGLFYYLAPIYSPNAWMWWTSGATAARWQVLI. The helical transmembrane segment at 366–385 threads the bilayer; sequence RIAIDLSFMIIGGAIFAIFW. At 386–428 the chain is on the cytoplasmic side; sequence VETADMGPDATARQIQNSGMQIPGFRKNQGVIEKVMERYIPQV. Residues 429 to 447 form a helical membrane-spanning segment; the sequence is TVIGGALVGLLAVMANMLG. Topologically, residues 448 to 452 are extracellular; sequence TIGNV. A helical transmembrane segment spans residues 453–467; it reads SGTGLLLTISITYKL. At 468-491 the chain is on the cytoplasmic side; the sequence is YEEIAEEQMMEMHPMMREMFGGGD.

The protein belongs to the SecY/SEC61-alpha family. In terms of assembly, component of the Sec protein translocase complex. Heterotrimer consisting of alpha (SecY), beta (SecG) and gamma (SecE) subunits. The heterotrimers can form oligomers, although 1 heterotrimer is thought to be able to translocate proteins. Interacts with the ribosome. May interact with SecDF, and other proteins may be involved.

It localises to the cell membrane. In terms of biological role, the central subunit of the protein translocation channel SecYEG. Consists of two halves formed by TMs 1-5 and 6-10. These two domains form a lateral gate at the front which open onto the bilayer between TMs 2 and 7, and are clamped together by SecE at the back. The channel is closed by both a pore ring composed of hydrophobic SecY resides and a short helix (helix 2A) on the extracellular side of the membrane which forms a plug. The plug probably moves laterally to allow the channel to open. The ring and the pore may move independently. The chain is Protein translocase subunit SecY from Halobacterium salinarum (strain ATCC 700922 / JCM 11081 / NRC-1) (Halobacterium halobium).